We begin with the raw amino-acid sequence, 308 residues long: Acyltransferase drtE (308 aa).

Residues 35-159 form the AB hydrolase-1 domain; that stretch reads PALVMNPGYN…AAEAKDNFSR (125 aa).

It belongs to the polyketide transferase af380 family.

The protein operates within secondary metabolite biosynthesis; terpenoid biosynthesis. Its function is as follows. Acyltransferase; part of the gene cluster that mediates the biosynthesis of various drimane-type sesquiterpene esters, compounds that exhibit diverse biological activities and are widely present in eukaryotes. The pathway begins with the synthesis of the backbone drimenol by the terpene cyclase drtB using farnesyl pyrophosphate (FPP) as substrate. The cytochrome P450 monooxygenase drtD is then responsible for the hydroxylations at C-6, C-9 and C-12, as well as the oxidation of hydroxyl groups at C-6 and C-11 to a ketone and an aldehyde, respectively. Then, the biosynthesis can go in two directions, either the hydroxylated drimenol is further hydroxylated at C-2 and C-3 by an enzyme(s) not associated with the drt cluster, or the FAD-binding oxidoreductase drtC further oxidizes C-11 or C-12 to form the butyrolactone ring. DrtB, drtD and drtC are solely responsible for the formation of the different drimane structures observed during drimane sesquiterpenes biosynthesis. The polyketide synthase drtA synthesizes different lengths (C6 and C8) of PKS chains, which are then oxidized to varying degrees by the short-chain dehydrogenase drtF. Finally, these PKS chains are transferred onto drimane sesquiterpenes by the acyltransferase drtE, forming the sesquiterpene esters. In addition to the different fatty acyl-CoA chains produced by drtA, drtE is also able to use cinnamoyl-CoA as a substrate. The chain is Acyltransferase drtE from Aspergillus calidoustus.